The chain runs to 375 residues: DNA replication and repair protein RecF (375 aa).

Residue 30 to 37 participates in ATP binding; sequence GENAQGKT.

This sequence belongs to the RecF family.

The protein resides in the cytoplasm. Functionally, the RecF protein is involved in DNA metabolism; it is required for DNA replication and normal SOS inducibility. RecF binds preferentially to single-stranded, linear DNA. It also seems to bind ATP. This Bacillus anthracis (strain A0248) protein is DNA replication and repair protein RecF.